Reading from the N-terminus, the 339-residue chain is MEILLQKVYDQENLSKEEMNIIATEIFEGRLSKTKMAAFLMALKVKGETAEEMAGIAQAMQQVAIQVAFPAGTAMDNCGTGGDKSNSFNISTTSAFVLAAAGIPVAKHGNRSISSRSGSADVCQELGIDINLRPEDMTYLLEKVGIAFLFAPHVHPNMKYVMDVRKELGTPTIFNLIGPLTNPVHLETQLMGIYRRDLLEQTAEVLGQLGRKRAVVLNGAGFMDEASLAGENHYALYENGEVHLYTLRPEDVGLTSYPLEAITGGDAKENAAILRSVLEGEPGAYLDTVLLNAGFGLFANGKVETVQEGVDLAKDLISSGLAKQKLADLITYQKEVLAK.

Residues G79, G82–D83, S87, N89–T92, K107–S115, and S119 contribute to the 5-phospho-alpha-D-ribose 1-diphosphate site. Residue G79 coordinates anthranilate. S91 is a binding site for Mg(2+). Residue N110 coordinates anthranilate. R165 contacts anthranilate. 2 residues coordinate Mg(2+): D224 and E225.

The protein belongs to the anthranilate phosphoribosyltransferase family. As to quaternary structure, homodimer. It depends on Mg(2+) as a cofactor.

The enzyme catalyses N-(5-phospho-beta-D-ribosyl)anthranilate + diphosphate = 5-phospho-alpha-D-ribose 1-diphosphate + anthranilate. It participates in amino-acid biosynthesis; L-tryptophan biosynthesis; L-tryptophan from chorismate: step 2/5. Its function is as follows. Catalyzes the transfer of the phosphoribosyl group of 5-phosphorylribose-1-pyrophosphate (PRPP) to anthranilate to yield N-(5'-phosphoribosyl)-anthranilate (PRA). This chain is Anthranilate phosphoribosyltransferase, found in Listeria monocytogenes serovar 1/2a (strain ATCC BAA-679 / EGD-e).